Consider the following 479-residue polypeptide: Transcription factor CP2-like protein 1 (479 aa).

The Grh/CP2 DB domain occupies 43–280 (RLPPLQYVLC…PSPSYNGSPN (238 aa)). Disordered stretches follow at residues 219–245 (KPKG…KEKY) and 271–301 (PSPS…LPVG). The span at 221–245 (KGADRKQKTDREKMEKRTAQEKEKY) shows a compositional bias: basic and acidic residues. Residues 261-365 (PDVAYQVNSA…IRLFNAIKGR (105 aa)) form an SAM2-like domain region. Residues 271–281 (PSPSYNGSPNS) are compositionally biased toward polar residues.

This sequence belongs to the grh/CP2 family. CP2 subfamily. As to quaternary structure, forms homohexamers via its SAM-like domain. Interacts with MTA1; which is indispensable for TFCP2l1-mediated self-renewal-promoting effect and endoderm-inhibiting action. As to expression, highly expressed in placental JEG-3 cells and very low levels of expression in non-steroidogenic cells. No expression was seen in adrenal NCI-H295A cells or in adrenal tissue.

The protein localises to the nucleus. Transcription factor that facilitates establishment and maintenance of pluripotency in embryonic stem cells (ESCs). With KLF2, acts as the major effector of self-renewal that mediates induction of pluripotency downstream of LIF/STAT3 and Wnt/beta-catenin signaling. Required for normal duct development in the salivary gland and kidney. Coordinates the development of the kidney collecting ducts intercalated (IC) and principal (PC) cells, which regulate acid-base and salt-water homeostasis, respectively. Regulates the expression of IC genes including subunits B1 and D2 of the V-ATPase complex, OXGR1, CA12, SLC4A1, AQP6 and IC-specific transcription factor FOXI1. Also regulates the expression of JAG1 and subsequent notch signaling in the collecting duct. JAG1 initiates notch signaling in PCs but inhibits notch signaling in ICs. Acts as a transcriptional suppressor that may suppress UBP1-mediated transcriptional activation. Modulates the placental expression of CYP11A1. The protein is Transcription factor CP2-like protein 1 (TFCP2L1) of Homo sapiens (Human).